The primary structure comprises 519 residues: 2-isopropylmalate synthase (519 aa).

The region spanning 5-267 is the Pyruvate carboxyltransferase domain; sequence VIIFDTTLRD…YTNIHHHEIY (263 aa). Positions 14, 202, 204, and 238 each coordinate Mn(2+). The tract at residues 392–519 is regulatory domain; that stretch reads ALESFHIHST…NHKNTQHIKK (128 aa).

This sequence belongs to the alpha-IPM synthase/homocitrate synthase family. LeuA type 1 subfamily. As to quaternary structure, homodimer. The cofactor is Mn(2+).

It is found in the cytoplasm. It catalyses the reaction 3-methyl-2-oxobutanoate + acetyl-CoA + H2O = (2S)-2-isopropylmalate + CoA + H(+). Its pathway is amino-acid biosynthesis; L-leucine biosynthesis; L-leucine from 3-methyl-2-oxobutanoate: step 1/4. Catalyzes the condensation of the acetyl group of acetyl-CoA with 3-methyl-2-oxobutanoate (2-ketoisovalerate) to form 3-carboxy-3-hydroxy-4-methylpentanoate (2-isopropylmalate). This Blochmanniella floridana protein is 2-isopropylmalate synthase.